Here is a 453-residue protein sequence, read N- to C-terminus: Bifunctional protein GlmU (453 aa).

The interval 1–226 is pyrophosphorylase; it reads MKFSAVILAA…PIEVEGVNDR (226 aa). Residues 8-11, Lys-22, Gln-73, 78-79, 100-102, Gly-137, Glu-151, Asn-166, and Asn-224 each bind UDP-N-acetyl-alpha-D-glucosamine; these read LAAG, GT, and YGD. Asp-102 is a Mg(2+) binding site. A Mg(2+)-binding site is contributed by Asn-224. The segment at 227–247 is linker; it reads AQLARLERAFQAAQAKKLLEQ. Residues 248 to 453 are N-acetyltransferase; sequence GVMLRDPARF…TGWQRPVKKK (206 aa). 2 residues coordinate UDP-N-acetyl-alpha-D-glucosamine: Arg-330 and Lys-348. The Proton acceptor role is filled by His-360. Residues Tyr-363 and Asn-374 each contribute to the UDP-N-acetyl-alpha-D-glucosamine site. Acetyl-CoA contacts are provided by residues Ala-377, 383–384, Ser-402, Ala-420, and Arg-437; that span reads NY.

In the N-terminal section; belongs to the N-acetylglucosamine-1-phosphate uridyltransferase family. It in the C-terminal section; belongs to the transferase hexapeptide repeat family. As to quaternary structure, homotrimer. The cofactor is Mg(2+).

It is found in the cytoplasm. The enzyme catalyses alpha-D-glucosamine 1-phosphate + acetyl-CoA = N-acetyl-alpha-D-glucosamine 1-phosphate + CoA + H(+). It catalyses the reaction N-acetyl-alpha-D-glucosamine 1-phosphate + UTP + H(+) = UDP-N-acetyl-alpha-D-glucosamine + diphosphate. Its pathway is nucleotide-sugar biosynthesis; UDP-N-acetyl-alpha-D-glucosamine biosynthesis; N-acetyl-alpha-D-glucosamine 1-phosphate from alpha-D-glucosamine 6-phosphate (route II): step 2/2. The protein operates within nucleotide-sugar biosynthesis; UDP-N-acetyl-alpha-D-glucosamine biosynthesis; UDP-N-acetyl-alpha-D-glucosamine from N-acetyl-alpha-D-glucosamine 1-phosphate: step 1/1. It participates in bacterial outer membrane biogenesis; LPS lipid A biosynthesis. In terms of biological role, catalyzes the last two sequential reactions in the de novo biosynthetic pathway for UDP-N-acetylglucosamine (UDP-GlcNAc). The C-terminal domain catalyzes the transfer of acetyl group from acetyl coenzyme A to glucosamine-1-phosphate (GlcN-1-P) to produce N-acetylglucosamine-1-phosphate (GlcNAc-1-P), which is converted into UDP-GlcNAc by the transfer of uridine 5-monophosphate (from uridine 5-triphosphate), a reaction catalyzed by the N-terminal domain. The polypeptide is Bifunctional protein GlmU (Vibrio vulnificus (strain CMCP6)).